The following is a 354-amino-acid chain: Methionine import ATP-binding protein MetN (354 aa).

Positions 8 to 250 constitute an ABC transporter domain; that stretch reads LDHIDITFRQ…PKEALTQEFI (243 aa). Position 42–49 (42–49) interacts with ATP; sequence GYSGAGKS.

This sequence belongs to the ABC transporter superfamily. Methionine importer (TC 3.A.1.24) family. In terms of assembly, the complex is composed of two ATP-binding proteins (MetN), two transmembrane proteins (MetI) and a solute-binding protein (MetQ).

It is found in the cell membrane. It catalyses the reaction L-methionine(out) + ATP + H2O = L-methionine(in) + ADP + phosphate + H(+). The enzyme catalyses D-methionine(out) + ATP + H2O = D-methionine(in) + ADP + phosphate + H(+). Functionally, part of the ABC transporter complex MetNIQ involved in methionine import. Responsible for energy coupling to the transport system. The protein is Methionine import ATP-binding protein MetN of Streptococcus pyogenes serotype M1.